An 88-amino-acid polypeptide reads, in one-letter code: Small ribosomal subunit protein bS16 (88 aa).

It belongs to the bacterial ribosomal protein bS16 family.

The polypeptide is Small ribosomal subunit protein bS16 (Pelotomaculum thermopropionicum (strain DSM 13744 / JCM 10971 / SI)).